Here is a 550-residue protein sequence, read N- to C-terminus: MAVALNIADLAEHAIDAVPDRVALICGDEQLTYAQLEEKANRLAHHLIDQGVGKGDKVGLYCRNRIEIVIAMLGIIKAGAILINVNFRYVEGELKYLFDNSDMVALVHERQYADRVANVLPDTPNVKTILVVQDGSDKDYRRYGGVEFYSAIADSSPERDFAELQRERSADDIYILYTGGTTGFPKGVMWRHEDIYRVLFGGTDFATGEFIKDEYDLAKAAAANPPMIRYPIPPMIHGATQSATWMSIFSGQTTVLAPEFDADQVWRTISDRKVNLLFFTGDAMARPLLDALMKDNDYDLSSLFLLASTAALFSPSIKEKLLELLPNRVITDSIGSSETGFGGTSIVGAGQATTGGPRVTIDHRTVVLDEEGNEVKPGSGVRGIIAKKGNIPVGYYKDEKKTAETFKTINGVRYAIPGDYAMVEADGTVTMLGRGSVSINSGGEKIYPEEVEAALKGHPDVFDALVVGVPDPRYGQHVAAVVAPRPGSRPSLAELDGFVRSAIAGYKVPRSLWFVDEVKRSPAGKPDYRWAKEQTEARPADDVHAAHVSA.

ATP is bound by residues 178–186, aspartate 419, arginine 434, and lysine 525; that span reads TGGTTGFPK. Residues 525-550 are disordered; sequence KPDYRWAKEQTEARPADDVHAAHVSA.

It belongs to the ATP-dependent AMP-binding enzyme family.

The catalysed reaction is a medium-chain fatty acid + ATP + CoA = a medium-chain fatty acyl-CoA + AMP + diphosphate. It catalyses the reaction a long-chain fatty acid + ATP + CoA = a long-chain fatty acyl-CoA + AMP + diphosphate. It carries out the reaction (25S)-3-oxocholest-4-en-26-oate + ATP + CoA = (25S)-3-oxocholest-4-en-26-oyl-CoA + AMP + diphosphate. The protein operates within lipid metabolism; fatty acid biosynthesis. It functions in the pathway steroid metabolism; cholesterol metabolism. Catalyzes the activation of medium/long-chain fatty acids as acyl-coenzyme A (acyl-CoA), which are then transferred to the multifunctional polyketide synthase (PKS) type III for further chain extension. Also involved in the degradation of cholesterol via the degradation of the side chains of C-24 branched-chain sterols. Catalyzes the ATP-dependent CoA thioesterification of the sterol 3-oxocholest-4-en-26-oate to yield 3-oxocholest-4-en-26-oyl-CoA. This chain is Medium/long-chain-fatty-acid--CoA/3-oxocholest-4-en-26-oate--CoA ligase, found in Mycobacterium marinum (strain ATCC BAA-535 / M).